The sequence spans 494 residues: Cytochrome P450 2A10 (494 aa).

Lys379 bears the N6-acetyllysine mark. Cys439 is a heme binding site.

It belongs to the cytochrome P450 family. Heme serves as cofactor. As to expression, expressed in liver and lung as well as in nasal tissues.

The protein localises to the endoplasmic reticulum membrane. Its subcellular location is the microsome membrane. It carries out the reaction an organic molecule + reduced [NADPH--hemoprotein reductase] + O2 = an alcohol + oxidized [NADPH--hemoprotein reductase] + H2O + H(+). Functionally, catalyzes the oxygenation of a variety of substrates, including ethanol and procarcinogens such as N-nitrosodiethylamine and phenacetin. Exhibits a high coumarin 7-hydroxylase activity. Converts also testosterone to androstenedione. This chain is Cytochrome P450 2A10 (CYP2A10), found in Oryctolagus cuniculus (Rabbit).